The primary structure comprises 84 residues: Sec-independent protein translocase protein TatA (84 aa).

Residues 1 to 21 (MGGLQPWHWLIVIAVFVLLFG) traverse the membrane as a helical segment. Positions 46–84 (MQSDSNAAKSDQPEQITSERVVVDPSTQSTSSNSDKRPA) are disordered. Residues 48-63 (SDSNAAKSDQPEQITS) show a composition bias toward polar residues.

The protein belongs to the TatA/E family. As to quaternary structure, the Tat system comprises two distinct complexes: a TatABC complex, containing multiple copies of TatA, TatB and TatC subunits, and a separate TatA complex, containing only TatA subunits. Substrates initially bind to the TatABC complex, which probably triggers association of the separate TatA complex to form the active translocon.

The protein localises to the cell membrane. In terms of biological role, part of the twin-arginine translocation (Tat) system that transports large folded proteins containing a characteristic twin-arginine motif in their signal peptide across membranes. TatA could form the protein-conducting channel of the Tat system. The polypeptide is Sec-independent protein translocase protein TatA (Mycolicibacterium gilvum (strain PYR-GCK) (Mycobacterium gilvum (strain PYR-GCK))).